A 356-amino-acid chain; its full sequence is Probable methyltransferase-like protein 15 homolog (356 aa).

S-adenosyl-L-methionine contacts are provided by residues 55–57 (GGH), Asp-74, Phe-103, Asp-126, and Gln-133.

The protein belongs to the methyltransferase superfamily. RsmH family.

Probable S-adenosyl-L-methionine-dependent methyltransferase. In Drosophila melanogaster (Fruit fly), this protein is Probable methyltransferase-like protein 15 homolog.